Reading from the N-terminus, the 409-residue chain is Arginine biosynthesis bifunctional protein ArgJ (409 aa).

Substrate contacts are provided by threonine 156, lysine 182, threonine 193, glutamate 280, asparagine 404, and serine 409. Catalysis depends on threonine 193, which acts as the Nucleophile.

Belongs to the ArgJ family. In terms of assembly, heterotetramer of two alpha and two beta chains.

The protein resides in the cytoplasm. It carries out the reaction N(2)-acetyl-L-ornithine + L-glutamate = N-acetyl-L-glutamate + L-ornithine. It catalyses the reaction L-glutamate + acetyl-CoA = N-acetyl-L-glutamate + CoA + H(+). The protein operates within amino-acid biosynthesis; L-arginine biosynthesis; L-ornithine and N-acetyl-L-glutamate from L-glutamate and N(2)-acetyl-L-ornithine (cyclic): step 1/1. It participates in amino-acid biosynthesis; L-arginine biosynthesis; N(2)-acetyl-L-ornithine from L-glutamate: step 1/4. Catalyzes two activities which are involved in the cyclic version of arginine biosynthesis: the synthesis of N-acetylglutamate from glutamate and acetyl-CoA as the acetyl donor, and of ornithine by transacetylation between N(2)-acetylornithine and glutamate. The protein is Arginine biosynthesis bifunctional protein ArgJ of Nitrosomonas europaea (strain ATCC 19718 / CIP 103999 / KCTC 2705 / NBRC 14298).